Reading from the N-terminus, the 354-residue chain is Uroporphyrinogen decarboxylase (354 aa).

Substrate is bound by residues 27-31 (RQAGR), aspartate 77, tyrosine 153, threonine 208, and histidine 326.

The protein belongs to the uroporphyrinogen decarboxylase family. Homodimer.

It localises to the cytoplasm. The enzyme catalyses uroporphyrinogen III + 4 H(+) = coproporphyrinogen III + 4 CO2. It functions in the pathway porphyrin-containing compound metabolism; protoporphyrin-IX biosynthesis; coproporphyrinogen-III from 5-aminolevulinate: step 4/4. Catalyzes the decarboxylation of four acetate groups of uroporphyrinogen-III to yield coproporphyrinogen-III. This Neisseria gonorrhoeae (strain ATCC 700825 / FA 1090) protein is Uroporphyrinogen decarboxylase.